Here is a 546-residue protein sequence, read N- to C-terminus: Glutamyl-tRNA(Gln) amidotransferase subunit A, chloroplastic/mitochondrial (546 aa).

The segment at 21–52 is disordered; sequence KRRRFHSSTPLFLSQPQTLASTDPPSSPPQSQ. Over residues 27-43 the composition is skewed to polar residues; sequence SSTPLFLSQPQTLASTD. Catalysis depends on charge relay system residues K123 and S198. The active-site Acyl-ester intermediate is the S222.

The protein belongs to the amidase family. GatA subfamily. Subunit of the heterotrimeric GatCAB amidotransferase (AdT) complex, composed of A, B and C subunits.

The protein localises to the mitochondrion. It is found in the plastid. Its subcellular location is the chloroplast stroma. The enzyme catalyses L-glutamyl-tRNA(Gln) + L-glutamine + ATP + H2O = L-glutaminyl-tRNA(Gln) + L-glutamate + ADP + phosphate + H(+). Allows the formation of correctly charged Gln-tRNA(Gln) through the transamidation of misacylated Glu-tRNA(Gln) in chloroplasts and mitochondria. The reaction takes place in the presence of glutamine and ATP through an activated gamma-phospho-Glu-tRNA(Gln). The polypeptide is Glutamyl-tRNA(Gln) amidotransferase subunit A, chloroplastic/mitochondrial (Vitis vinifera (Grape)).